The sequence spans 765 residues: Putative maltooligosyl trehalose synthase (765 aa).

This sequence belongs to the glycosyl hydrolase 13 family. As to quaternary structure, monomer.

It catalyses the reaction 4-[(1-&gt;4)-alpha-D-glucosyl](n-1)-D-glucose = 1-[(1-&gt;4)-alpha-D-glucosyl](n-1)-alpha-D-glucose. Functionally, catalyzes the conversion of maltooligosaccharide into the non-reducing saccharide, maltooligosyl trehalose (alpha-maltooligosyl alpha-D-glucoside) by intramolecular transglycosylation. The polypeptide is Putative maltooligosyl trehalose synthase (treY) (Mycobacterium tuberculosis (strain CDC 1551 / Oshkosh)).